A 384-amino-acid chain; its full sequence is Surfeit locus protein 1-like (384 aa).

3 consecutive transmembrane segments (helical) span residues 55-75, 302-322, and 338-358; these read ALLWYLVGFTTYGLGETYKFL, IPLDYHLYTVLWHWSSLTCFI, and IGVEPILIPISILVFICTKIY.

The protein belongs to the SURF1 (TC 3.D.4.8) family.

It is found in the mitochondrion inner membrane. May be involved in the biogenesis of the COX complex. This Arabidopsis thaliana (Mouse-ear cress) protein is Surfeit locus protein 1-like.